Here is a 430-residue protein sequence, read N- to C-terminus: Dihydrolipoyllysine-residue acetyltransferase component of pyruvate dehydrogenase complex (430 aa).

A Lipoyl-binding domain is found at 2–77; the sequence is AFEFRLPDIG…VVGDVIVKID (76 aa). Residue K43 is modified to N6-lipoyllysine. The tract at residues 80–122 is disordered; it reads DAEDMQFKGHDDDSSSKEEPAKEEAPAEQAPVATQTEEVDENR. Over residues 84–104 the composition is skewed to basic and acidic residues; that stretch reads MQFKGHDDDSSSKEEPAKEEA. Positions 125 to 162 constitute a Peripheral subunit-binding (PSBD) domain; the sequence is KAMPSVRKYAREKGVNIKAVSGSGKNGRITKEDVDAYL. The segment at 165–200 is disordered; that stretch reads GAPTASNESAASATSEEVAETPAAPAAVTLEGDFPE. Over residues 166-193 the composition is skewed to low complexity; it reads APTASNESAASATSEEVAETPAAPAAVT. The active site involves H401.

It belongs to the 2-oxoacid dehydrogenase family. In terms of assembly, forms a 24-polypeptide structural core with octahedral symmetry. Requires (R)-lipoate as cofactor.

It carries out the reaction N(6)-[(R)-dihydrolipoyl]-L-lysyl-[protein] + acetyl-CoA = N(6)-[(R)-S(8)-acetyldihydrolipoyl]-L-lysyl-[protein] + CoA. Functionally, the pyruvate dehydrogenase complex catalyzes the overall conversion of pyruvate to acetyl-CoA and CO(2). It contains multiple copies of three enzymatic components: pyruvate dehydrogenase (E1), dihydrolipoamide acetyltransferase (E2) and lipoamide dehydrogenase (E3). This chain is Dihydrolipoyllysine-residue acetyltransferase component of pyruvate dehydrogenase complex (pdhC), found in Staphylococcus aureus (strain COL).